Reading from the N-terminus, the 1028-residue chain is Golgin subfamily A member 2 (1028 aa).

A disordered region spans residues 1-112 (MADQNRQIKL…NRPLSSTESL (112 aa)). Over residues 40–60 (KGDQTDAPADRRSPENERVDV) the composition is skewed to basic and acidic residues. Over residues 74-87 (NPASAINTDNSAPQ) the composition is skewed to polar residues. Coiled-coil stretches lie at residues 162–200 (NTQL…EQGA), 233–388 (ARQK…YAVQ), 414–690 (RDST…LLNG), 738–769 (LSRV…LTAL), and 799–840 (HEAL…LSGE). The disordered stretch occupies residues 259–280 (RTLSSVSTQQKQHERHNKELEK). A disordered region spans residues 756 to 791 (RRIHQDTRQQLTALSHDHHHHHHHEPHSTCAETDGS). Positions 944-981 (AMDVSSSPQSSTAEIQSQSSERPAADPISSPSLRPQED) are disordered. A compositionally biased stretch (polar residues) spans 945 to 964 (MDVSSSPQSSTAEIQSQSSE).

It belongs to the GOLGA2 family.

The protein localises to the golgi apparatus. It localises to the cis-Golgi network membrane. The protein resides in the endoplasmic reticulum-Golgi intermediate compartment membrane. Its subcellular location is the cytoplasm. It is found in the cytoskeleton. The protein localises to the spindle pole. In terms of biological role, peripheral membrane component of the cis-Golgi stack that acts as a membrane skeleton that maintains the structure of the Golgi apparatus, and as a vesicle thether that facilitates vesicle fusion to the Golgi membrane. Required for normal protein transport from the endoplasmic reticulum to the Golgi apparatus and the cell membrane. Plays a central role in mitotic Golgi disassembly. Also plays a key role in spindle pole assembly and centrosome organization. It probably promotes mitotic spindle pole assembly by activating assembly factors to nucleate microtubules around the Golgi and capture them to couple mitotic membranes to the spindle. Also required for the Golgi ribbon formation and glycosylation of membrane and secretory proteins. The sequence is that of Golgin subfamily A member 2 from Danio rerio (Zebrafish).